The chain runs to 438 residues: Glutamyl-tRNA reductase (438 aa).

Residues 49–52 (TCNR), Ser109, 114–116 (EQQ), and Gln120 contribute to the substrate site. The active-site Nucleophile is the Cys50. 191–196 (GAGAMA) lines the NADP(+) pocket.

The protein belongs to the glutamyl-tRNA reductase family. Homodimer.

It carries out the reaction (S)-4-amino-5-oxopentanoate + tRNA(Glu) + NADP(+) = L-glutamyl-tRNA(Glu) + NADPH + H(+). The protein operates within porphyrin-containing compound metabolism; protoporphyrin-IX biosynthesis; 5-aminolevulinate from L-glutamyl-tRNA(Glu): step 1/2. Catalyzes the NADPH-dependent reduction of glutamyl-tRNA(Glu) to glutamate 1-semialdehyde (GSA). The polypeptide is Glutamyl-tRNA reductase (Corynebacterium diphtheriae (strain ATCC 700971 / NCTC 13129 / Biotype gravis)).